The following is an 844-amino-acid chain: 3',5'-cyclic-AMP phosphodiesterase 4A (844 aa).

Residues 1–124 (MEPPAAPSER…RSPLDSQASP (124 aa)) are disordered. A Phosphoserine modification is found at Ser13. Positions 36–46 (QPRTPIRIQQR) are enriched in low complexity. The span at 51-78 (SAERSETERSPHRPIERADAVDTGDRPG) shows a compositional bias: basic and acidic residues. Residues 82–91 (TRMSWPSSFH) are compositionally biased toward polar residues. Ser147 is subject to Phosphoserine; by MAPKAPK2. Residues Ser152, Ser160, and Ser204 each carry the phosphoserine modification. The segment at 296–317 (PSPTPRQRAFQQPPPSVLRQSQ) is disordered. Ser333 bears the Phosphoserine mark. A PDEase domain is found at 343-672 (VKTDQEDLLA…DWYHSAIRQS (330 aa)). Residue Lys344 forms a Glycyl lysine isopeptide (Lys-Gly) (interchain with G-Cter in SUMO) linkage. His419 serves as the catalytic Proton donor. His419 provides a ligand contact to 3',5'-cyclic AMP. AMP is bound by residues His419 and His423. Zn(2+) contacts are provided by His423, His459, Asp460, and Asp577. Residues Asp460, Asp577, Gln628, and Phe631 each contribute to the AMP site. Asp460 is a binding site for Mg(2+). Asp460 is a Mn(2+) binding site. Positions 628 and 631 each coordinate 3',5'-cyclic AMP. Disordered regions lie at residues 668–690 (AIRQSPSPPLEEEPGGLGHPSLP) and 818–844 (SACSGTSGDNSAIISAPGRWGSGGDPA). A phosphoserine mark is found at Ser672 and Ser674. Over residues 820–830 (CSGTSGDNSAI) the composition is skewed to polar residues.

Belongs to the cyclic nucleotide phosphodiesterase family. PDE4 subfamily. As to quaternary structure, interacts with LYN (via SH3 domain). Interacts with ARRB2. Zn(2+) serves as cofactor. Mg(2+) is required as a cofactor. It depends on Mn(2+) as a cofactor. In terms of processing, phosphorylated by MAPKAPK2 at Ser-147; it counteracts PKA-induced activation of PDE4A and modulates intracellular cAMP levels. Likely involved in cellular desensitization to cAMP signaling. Proteolytically cleaved by CASP3. In terms of tissue distribution, isoform 2 is testis specific.

It is found in the cytoplasm. Its subcellular location is the cytosol. The protein localises to the membrane. The enzyme catalyses 3',5'-cyclic AMP + H2O = AMP + H(+). It participates in purine metabolism; 3',5'-cyclic AMP degradation; AMP from 3',5'-cyclic AMP: step 1/1. Its activity is regulated as follows. Inhibited by rolipram. In terms of biological role, hydrolyzes the second messenger 3',5'-cyclic AMP (cAMP), which is a key regulator of many important physiological processes. Efficiently hydrolyzes cAMP. The polypeptide is 3',5'-cyclic-AMP phosphodiesterase 4A (Pde4a) (Rattus norvegicus (Rat)).